A 178-amino-acid chain; its full sequence is Protein FAM89A (178 aa).

It belongs to the FAM89 family.

In Bos taurus (Bovine), this protein is Protein FAM89A (FAM89A).